The following is a 450-amino-acid chain: Probable galactarate/D-glucarate transporter GudP (450 aa).

Topologically, residues 1-20 (MSSLSQAASSVEKRTNARYW) are cytoplasmic. The helical transmembrane segment at 21 to 41 (IVVMLFIVTSFNYGDRATLSI) threads the bilayer. Topologically, residues 42-58 (AGSEMAKDIGLDPVGMG) are periplasmic. A helical membrane pass occupies residues 59–79 (YVFSAFSWAYVIGQIPGGWLL). The Cytoplasmic portion of the chain corresponds to 80-85 (DRFGSK). A helical membrane pass occupies residues 86 to 105 (RVYFWSIFIWSMFTLLQGFV). The Periplasmic segment spans residues 106–109 (DIFS). Residues 110 to 132 (GFGIIVALFTLRFLVGLAEAPSF) form a helical membrane-spanning segment. Residues 133–153 (PGNSRIVAAWFPAQERGTAVS) lie on the Cytoplasmic side of the membrane. The chain crosses the membrane as a helical span at residues 154–174 (IFNSAQYFATVIFAPIMGWLT). Over 175-176 (HE) the chain is Periplasmic. A helical transmembrane segment spans residues 177–197 (VGWSHVFFFMGGLGIVISFIW). Topologically, residues 198-254 (LKVIHEPNQHPGVNKKELEYIAAGGALINMDQQNTKVKVPFSVKWGQIKQLLGSRMM) are cytoplasmic. A helical membrane pass occupies residues 255 to 275 (IGVYIGQYCINALTYFFITWF). The Periplasmic segment spans residues 276-290 (PVYLVQARGMSILKA). A helical membrane pass occupies residues 291 to 311 (GFVASVPAVCGFIGGVLGGII). The Cytoplasmic segment spans residues 312–329 (SDWLMRRTGSLNIARKTP). The helical transmembrane segment at 330-350 (IVMGMLLSMVMVFCNYVNVEW) threads the bilayer. Met-351 is a topological domain (periplasmic). A helical membrane pass occupies residues 352–372 (IIGFMALAFFGKGIGALGWAV). At 373 to 387 (MADTAPKEISGLSGG) the chain is on the cytoplasmic side. A helical membrane pass occupies residues 388 to 408 (LFNMFGNISGIVTPIAIGYIV). Over 409-415 (GTTGSFN) the chain is Periplasmic. Residues 416-436 (GALIYVGVHALIAVLSYLVLV) traverse the membrane as a helical segment. Residues 437 to 450 (GDIKRIELKPVAGQ) are Cytoplasmic-facing.

This sequence belongs to the major facilitator superfamily. Phthalate permease family.

Its subcellular location is the cell inner membrane. It catalyses the reaction galactarate(in) + H(+)(in) = galactarate(out) + H(+)(out). It carries out the reaction D-glucarate(in) + H(+)(in) = D-glucarate(out) + H(+)(out). The enzyme catalyses (R)-glycerate(in) + H(+)(in) = (R)-glycerate(out) + H(+)(out). Its function is as follows. Probably involved in the uptake of galactarate and/or D-glucarate. May also transport D-glycerate. This is Probable galactarate/D-glucarate transporter GudP from Escherichia coli (strain K12).